We begin with the raw amino-acid sequence, 726 residues long: Dipeptidyl-peptidase 5 (726 aa).

The signal sequence occupies residues 1 to 19; sequence MAAAKWLIASLAFASSGLA. 2 N-linked (GlcNAc...) asparagine glycosylation sites follow: Asn-96 and Asn-252. Residues 269–291 are disordered; the sequence is AEPINKRNGPRTPQGIEGASSSP. The active-site Charge relay system is Ser-558. Residue Asn-605 is glycosylated (N-linked (GlcNAc...) asparagine). Catalysis depends on charge relay system residues Asp-641 and His-673. An N-linked (GlcNAc...) asparagine glycan is attached at Asn-699.

This sequence belongs to the peptidase S9C family.

Its subcellular location is the secreted. This Arthroderma benhamiae (Trichophyton mentagrophytes) protein is Dipeptidyl-peptidase 5 (DPPV).